A 125-amino-acid polypeptide reads, in one-letter code: Holo-[acyl-carrier-protein] synthase (125 aa).

Mg(2+) contacts are provided by D8 and E57.

The protein belongs to the P-Pant transferase superfamily. AcpS family. Requires Mg(2+) as cofactor.

Its subcellular location is the cytoplasm. It carries out the reaction apo-[ACP] + CoA = holo-[ACP] + adenosine 3',5'-bisphosphate + H(+). Its function is as follows. Transfers the 4'-phosphopantetheine moiety from coenzyme A to a Ser of acyl-carrier-protein. This is Holo-[acyl-carrier-protein] synthase from Nitrosomonas eutropha (strain DSM 101675 / C91 / Nm57).